Consider the following 468-residue polypeptide: Sorting and assembly machinery component 50 homolog A (468 aa).

Residues 1–24 (MGTVHARSLDPLPMNGPDFGSPDD) form a disordered region. Residues 44-124 (VVVQRVHFEG…LDVTFEVTEL (81 aa)) enclose the POTRA domain.

The protein belongs to the SAM50/omp85 family. Associates with the mitochondrial contact site and cristae organizing system (MICOS) complex (also known as MINOS or MitOS complex).

The protein resides in the mitochondrion outer membrane. In terms of biological role, may play a role in the maintenance of the structure of mitochondrial cristae. The protein is Sorting and assembly machinery component 50 homolog A (samm50-a) of Xenopus laevis (African clawed frog).